The primary structure comprises 399 residues: Fructose-1,6-bisphosphate aldolase/phosphatase (399 aa).

Asp-11 serves as the catalytic Proton acceptor; for FBP phosphatase activity. Mg(2+) contacts are provided by Asp-11, His-18, Asp-52, and Asp-53. His-18 serves as a coordination point for beta-D-fructose 1,6-bisphosphate. His-18 is a dihydroxyacetone phosphate binding site. Tyr-91 provides a ligand contact to beta-D-fructose 1,6-bisphosphate. Residue Gln-95 participates in Mg(2+) binding. Position 104 to 105 (104 to 105 (GN)) interacts with beta-D-fructose 1,6-bisphosphate. Asp-132 serves as a coordination point for Mg(2+). Residue Lys-133 participates in beta-D-fructose 1,6-bisphosphate binding. Residue Lys-133 participates in dihydroxyacetone phosphate binding. The Proton donor/acceptor; for FBP aldolase activity role is filled by Tyr-229. Mg(2+) is bound by residues Lys-232, Asp-233, and Asp-234. The Schiff-base intermediate with DHAP; for FBP aldolase activity role is filled by Lys-232. Beta-D-fructose 1,6-bisphosphate-binding positions include 242 to 243 (QS), Arg-266, Asp-297, and Tyr-358. Dihydroxyacetone phosphate-binding residues include Arg-266 and Asp-297.

The protein belongs to the FBP aldolase/phosphatase family. Homooctamer; dimer of tetramers. The cofactor is Mg(2+).

The enzyme catalyses beta-D-fructose 1,6-bisphosphate + H2O = beta-D-fructose 6-phosphate + phosphate. It catalyses the reaction beta-D-fructose 1,6-bisphosphate = D-glyceraldehyde 3-phosphate + dihydroxyacetone phosphate. The protein operates within carbohydrate biosynthesis; gluconeogenesis. Functionally, catalyzes two subsequent steps in gluconeogenesis: the aldol condensation of dihydroxyacetone phosphate (DHAP) and glyceraldehyde-3-phosphate (GA3P) to fructose-1,6-bisphosphate (FBP), and the dephosphorylation of FBP to fructose-6-phosphate (F6P). This chain is Fructose-1,6-bisphosphate aldolase/phosphatase, found in Pyrobaculum neutrophilum (strain DSM 2338 / JCM 9278 / NBRC 100436 / V24Sta) (Thermoproteus neutrophilus).